Here is a 437-residue protein sequence, read N- to C-terminus: Succinate--CoA ligase [ADP-forming] subunit beta, hydrogenosomal (437 aa).

The N-terminal 27 residues, 1–27 (MLANVTRSTSKAAPALASIAQTAQKRF), are a transit peptide targeting the hydrogenosome. An ATP-grasp domain is found at 36 to 278 (MNLLHEYNVN…TTQEDPREVA (243 aa)). Residues Lys73, 80–82 (GRG), and Glu141 contribute to the ATP site. Positions 233 and 247 each coordinate Mg(2+). Substrate is bound by residues Asn299 and 356–358 (GIM).

This sequence belongs to the succinate/malate CoA ligase beta subunit family. In terms of assembly, heterodimer of an alpha and a beta subunit. The cofactor is Mg(2+).

It localises to the hydrogenosome. It carries out the reaction succinate + ATP + CoA = succinyl-CoA + ADP + phosphate. It participates in carbohydrate metabolism; tricarboxylic acid cycle; succinate from succinyl-CoA (ligase route): step 1/1. Succinyl-CoA synthetase functions in the citric acid cycle (TCA), coupling the hydrolysis of succinyl-CoA to the synthesis of ATP and thus represents the only step of substrate-level phosphorylation in the TCA. The beta subunit provides nucleotide specificity of the enzyme and binds the substrate succinate, while the binding sites for coenzyme A and phosphate are found in the alpha subunit. This Neocallimastix frontalis (Rumen fungus) protein is Succinate--CoA ligase [ADP-forming] subunit beta, hydrogenosomal.